Here is a 113-residue protein sequence, read N- to C-terminus: TYRO protein tyrosine kinase-binding protein (113 aa).

Positions 1–27 (MGGLEPCSRLLLLPLLLAVGGLRPVQA) are cleaved as a signal peptide. The Extracellular portion of the chain corresponds to 28-40 (QAQSDCSCSTVSP). The chain crosses the membrane as a helical span at residues 41 to 61 (GVLAGIVMGDLVLTVLIALAV). D50 lines the Ca(2+) pocket. Topologically, residues 62 to 113 (YFLGRLVHRGRGAAEAATRKQRITETESPYQELQGQRSDVYSDLNMQRPYYK) are cytoplasmic. A disordered region spans residues 75-113 (AEAATRKQRITETESPYQELQGQRSDVYSDLNMQRPYYK). The ITAM domain maps to 80–108 (RKQRITETESPYQELQGQRSDVYSDLNMQ). Residues 87 to 100 (TESPYQELQGQRSD) are compositionally biased toward polar residues. A phosphotyrosine mark is found at Y91 and Y102.

It belongs to the TYROBP family. Homodimer; disulfide-linked. Homotrimer; disulfide-linked. Homotetramer; disulfide-linked. Homotrimers and homotetramers form when low levels of partner receptors are available and is competitive with assembly with interacting receptors. They may represent alternative oligomerization states or may be intermediates in the receptor assembly process. Binding of a metal cation aids in homooligomerization through coordination of the metal ion by the subunits of the oligomer. Interacts with TREM1. Interacts with TREM2. Interacts with CLECSF5. Interacts with CD300LB and CD300C2. Interacts with CD300E. Interacts (via ITAM domain) with SYK (via SH2 domains); activates SYK mediating neutrophils and macrophages integrin-mediated activation. Interacts with KLRC2. Interacts with CD300H. Interacts with KLRD1. Interacts with SIGLEC1. Following ligand binding by associated receptors, tyrosine phosphorylated in the ITAM domain which leads to activation of additional tyrosine kinases and subsequent cell activation.

Its subcellular location is the cell membrane. Functionally, adapter protein which non-covalently associates with activating receptors found on the surface of a variety of immune cells to mediate signaling and cell activation following ligand binding by the receptors. TYROBP is tyrosine-phosphorylated in the ITAM domain following ligand binding by the associated receptors which leads to activation of additional tyrosine kinases and subsequent cell activation. Also has an inhibitory role in some cells. Non-covalently associates with activating receptors of the CD300 family to mediate cell activation. Also mediates cell activation through association with activating receptors of the CD200R family. Required for neutrophil activation mediated by integrin. Required for the activation of myeloid cells mediated by the CLEC5A/MDL1 receptor. Associates with natural killer (NK) cell receptors such as the KLRD1/KLRC2 heterodimer to mediate NK cell activation. Associates with TREM1 to mediate activation of neutrophils and monocytes. Associates with TREM2 on monocyte-derived dendritic cells to mediate up-regulation of chemokine receptor CCR7 and dendritic cell maturation and survival. Association with TREM2 mediates cytokine-induced formation of multinucleated giant cells which are formed by the fusion of macrophages. Stabilizes the TREM2 C-terminal fragment (TREM2-CTF) produced by TREM2 ectodomain shedding which suppresses the release of pro-inflammatory cytokines. In microglia, required with TREM2 for phagocytosis of apoptotic neurons. Required with ITGAM/CD11B in microglia to control production of microglial superoxide ions which promote the neuronal apoptosis that occurs during brain development. Promotes pro-inflammatory responses in microglia following nerve injury which accelerates degeneration of injured neurons. Positively regulates the expression of the IRAK3/IRAK-M kinase and IL10 production by liver dendritic cells and inhibits their T cell allosimulatory ability. Negatively regulates B cell proliferation. Required for CSF1-mediated osteoclast cytoskeletal organization. Positively regulates multinucleation during osteoclast development. This is TYRO protein tyrosine kinase-binding protein from Pan troglodytes (Chimpanzee).